Here is a 419-residue protein sequence, read N- to C-terminus: Methyltransferase/ribosomally synthesized type I borosin cyclic peptide precursor gjuMa (419 aa).

Residues 1 to 255 (MATPIATTTN…AISTLYVPPR (255 aa)) are methyltransferase domain. Active-site residues include Arg79, Tyr83, and Tyr105. S-adenosyl-L-methionine is bound by residues Tyr105, His107, Val110, Ala137, Gln179, Gly217, Ser248, and Thr249. The segment at 256–381 (DISPVDPTMA…GAVYALMSRP (126 aa)) is clasp domain. The interval 382–404 (TGDIAREKELTNDEIANNHGAPY) is precursor leader. Position 408 is an N-methylserine (Ser408). At Ala409 the chain carries N-methylalanine. Residue Val410 is modified to N-methylvaline. An N-methylisoleucine mark is found at Ile411 and Ile412. Ala413 and Ala414 each carry N-methylalanine. N-methylisoleucine is present on residues Ile415 and Ile416.

This sequence in the N-terminal section; belongs to the precorrin methyltransferase family. As to quaternary structure, homodimer. Post-translationally, gjuMA automethylates at Ser-408, Ala-409, Val-410, Ile-411, Ile-412, Ala-413, Ala-414, Ile-415 and Ile-416 before being processed by ae prolyloligopeptidase which likely forms a peptidyl ester upon removal of the follower propeptide, which then undergoes macrocyclization with the N-terminus of the modified core peptide. Peptide backbone alpha-N-methylations change the physicochemical properties of amide bonds to provide structural constraints and other favorable characteristics including biological membrane permeability to peptides.

Its pathway is secondary metabolite biosynthesis. Fusion protein of the methyltransferase gjuM and the type I borosin core peptide; part of the gene cluster that mediates the biosynthesis of a type I borosin, a highly methylated cyclic peptide with potent biological activities. Type I borosins derive from the C-terminus of the fusion protein, and it is the same protein that methylates its own C-terminus using S-adenosyl methionine (SAM). The C-terminus is subsequently cleaved off and macrocyclized by a prolyloligopeptidase to give the final product. In Gymnopilus junonius (Spectacular rustgill mushroom), this protein is Methyltransferase/ribosomally synthesized type I borosin cyclic peptide precursor gjuMa.